A 206-amino-acid chain; its full sequence is ATP-dependent Clp protease proteolytic subunit (206 aa).

The active-site Nucleophile is the serine 108. Histidine 133 is an active-site residue.

It belongs to the peptidase S14 family. Fourteen ClpP subunits assemble into 2 heptameric rings which stack back to back to give a disk-like structure with a central cavity, resembling the structure of eukaryotic proteasomes.

The protein resides in the cytoplasm. The catalysed reaction is Hydrolysis of proteins to small peptides in the presence of ATP and magnesium. alpha-casein is the usual test substrate. In the absence of ATP, only oligopeptides shorter than five residues are hydrolyzed (such as succinyl-Leu-Tyr-|-NHMec, and Leu-Tyr-Leu-|-Tyr-Trp, in which cleavage of the -Tyr-|-Leu- and -Tyr-|-Trp bonds also occurs).. Its function is as follows. Cleaves peptides in various proteins in a process that requires ATP hydrolysis. Has a chymotrypsin-like activity. Plays a major role in the degradation of misfolded proteins. The chain is ATP-dependent Clp protease proteolytic subunit from Chromohalobacter salexigens (strain ATCC BAA-138 / DSM 3043 / CIP 106854 / NCIMB 13768 / 1H11).